Reading from the N-terminus, the 299-residue chain is Inosose dehydratase (299 aa).

The protein belongs to the IolE/MocC family. Requires glutathione as cofactor. It depends on Co(2+) as a cofactor. Mn(2+) is required as a cofactor.

The enzyme catalyses scyllo-inosose = 3D-3,5/4-trihydroxycyclohexane-1,2-dione + H2O. Functionally, catalyzes the dehydration of inosose (2-keto-myo-inositol, 2KMI or 2,4,6/3,5-pentahydroxycyclohexanone) to 3D-(3,5/4)-trihydroxycyclohexane-1,2-dione (D-2,3-diketo-4-deoxy-epi-inositol). This Klebsiella pneumoniae subsp. pneumoniae (strain ATCC 700721 / MGH 78578) protein is Inosose dehydratase.